A 536-amino-acid polypeptide reads, in one-letter code: Global nitrogen regulator NrpR (536 aa).

The interval 7 to 72 (VEILSILSEA…EITEKGIEEL (66 aa)) is winged helix-turn-helix. NRD regions lie at residues 80–314 (RIGS…KGKF) and 315–536 (KVTP…YDDI).

It belongs to the NrpR family. As to quaternary structure, homotetramer. Binds to a single operator as a dimer and cooperatively to two operators as a dimer pair.

With respect to regulation, under nitrogen limitation, binding of the intracellular nitrogen metabolite 2-oxoglutarate to NrpR decreases the binding affinity of NrpR to DNA, leading to initiation of transcription. Transcriptional repressor of nitrogen fixation and assimilation genes. Binds to two tandem operators in the glnA and nif promoters, thereby blocking transcription of the genes. The sequence is that of Global nitrogen regulator NrpR from Methanococcus maripaludis (strain DSM 14266 / JCM 13030 / NBRC 101832 / S2 / LL).